The sequence spans 82 residues: MNEKTHNLQDTFLNHVRKNKTTLTIFLVNGVKLQGVVTWFDNFCVLLRRDGHSQLVYKHAISTIMPAQPVQLFEPEANGEEG.

One can recognise a Sm domain in the interval 10–70 (DTFLNHVRKN…ISTIMPAQPV (61 aa)).

This sequence belongs to the Hfq family. As to quaternary structure, homohexamer.

Its function is as follows. RNA chaperone that binds small regulatory RNA (sRNAs) and mRNAs to facilitate mRNA translational regulation in response to envelope stress, environmental stress and changes in metabolite concentrations. Also binds with high specificity to tRNAs. The sequence is that of RNA-binding protein Hfq from Parvibaculum lavamentivorans (strain DS-1 / DSM 13023 / NCIMB 13966).